The sequence spans 469 residues: Ribosomal protein uS12 methylthiotransferase RimO (469 aa).

The 111-residue stretch at N34 to P144 folds into the MTTase N-terminal domain. Positions 43, 79, 108, 176, 180, and 183 each coordinate [4Fe-4S] cluster. The Radical SAM core domain maps to L162–A399. The region spanning Q402 to R468 is the TRAM domain.

It belongs to the methylthiotransferase family. RimO subfamily. Requires [4Fe-4S] cluster as cofactor.

The protein localises to the cytoplasm. It carries out the reaction L-aspartate(89)-[ribosomal protein uS12]-hydrogen + (sulfur carrier)-SH + AH2 + 2 S-adenosyl-L-methionine = 3-methylsulfanyl-L-aspartate(89)-[ribosomal protein uS12]-hydrogen + (sulfur carrier)-H + 5'-deoxyadenosine + L-methionine + A + S-adenosyl-L-homocysteine + 2 H(+). Catalyzes the methylthiolation of an aspartic acid residue of ribosomal protein uS12. The sequence is that of Ribosomal protein uS12 methylthiotransferase RimO from Vibrio vulnificus (strain YJ016).